The chain runs to 167 residues: Protein-export protein SecB (167 aa).

The protein belongs to the SecB family. As to quaternary structure, homotetramer, a dimer of dimers. One homotetramer interacts with 1 SecA dimer.

The protein localises to the cytoplasm. Its function is as follows. One of the proteins required for the normal export of preproteins out of the cell cytoplasm. It is a molecular chaperone that binds to a subset of precursor proteins, maintaining them in a translocation-competent state. It also specifically binds to its receptor SecA. The polypeptide is Protein-export protein SecB (Wolbachia pipientis wMel).